Here is a 608-residue protein sequence, read N- to C-terminus: Extracellular metalloproteinase 5 (608 aa).

Residues 1 to 20 form the signal peptide; that stretch reads MHGLLLAAAGLLSLPLHVIA. Residues 21-244 constitute a propeptide that is removed on maturation; the sequence is HPQPSTNLAG…VHNVVDYVSH (224 aa). The N-linked (GlcNAc...) asparagine glycan is linked to Asn285. A Zn(2+)-binding site is contributed by His427. Glu428 is an active-site residue. His431 provides a ligand contact to Zn(2+). N-linked (GlcNAc...) asparagine glycosylation occurs at Asn591.

This sequence belongs to the peptidase M36 family. Zn(2+) is required as a cofactor.

It is found in the secreted. Its function is as follows. Secreted metalloproteinase probably acting as a virulence factor. This is Extracellular metalloproteinase 5 (MEP5) from Trichophyton tonsurans (Scalp ringworm fungus).